The sequence spans 1066 residues: Vinculin (1066 aa).

Positions Met-1–Phe-835 are N-terminal globular head. Ser-97 carries the phosphoserine modification. The interval Met-168–Ala-208 is talin-interaction. The residue at position 173 (Lys-173) is an N6-acetyllysine. 3 tandem repeats follow at residues Ala-259–Asn-369, Ala-370–Arg-479, and Ala-480–Glu-589. The segment at Ala-259–Glu-589 is 3 X 112 AA tandem repeats. Phosphoserine occurs at positions 260, 272, 275, 290, 346, and 434. At Lys-496 the chain carries N6-acetyllysine. Tyr-537 carries the phosphotyrosine modification. 3 positions are modified to phosphoserine: Ser-574, Ser-579, and Ser-600. Phosphothreonine is present on residues Thr-604 and Thr-672. The residue at position 721 (Ser-721) is a Phosphoserine. Residues Met-741–Leu-764 form an interaction with ACTN4 region. 2 positions are modified to phosphoserine: Ser-795 and Ser-809. Tyr-822 carries the phosphotyrosine modification. Positions Gln-836–Pro-878 are linker (Pro-rich). Positions Glu-857–Glu-887 are disordered. The span at Pro-860 to Pro-876 shows a compositional bias: pro residues. The segment at Glu-879–Gln-1066 is C-terminal tail. 2 facilitates phospholipid membrane insertion regions span residues Arg-935 to Arg-978 and Ala-1052 to Gln-1066. At Tyr-1065 the chain carries Phosphotyrosine; by SRC-type Tyr-kinases.

Belongs to the vinculin/alpha-catenin family. In terms of assembly, exhibits self-association properties. Part of a complex composed of THSD1, PTK2/FAK1, TLN1 and VCL. Interacts with APBB1IP, NRAP and TLN1. Interacts with SYNM. Interacts with CTNNB1 and this interaction is necessary for its localization to the cell-cell junctions and for its function in regulating cell surface expression of E-cadherin. Interacts with SORBS1. Interacts with SYNM. Interacts with CTNNA1. Binds to ACTN4; this interaction triggers conformational changes. Interacts with FLII. In terms of processing, phosphorylated; on serines, threonines and tyrosines. Phosphorylation on Tyr-1065 in activated platelets affects head-tail interactions and cell spreading but has no effect on actin binding nor on localization to focal adhesion plaques. Acetylated; mainly by myristic acid but also by a small amount of palmitic acid.

It localises to the cell membrane. The protein resides in the cell junction. Its subcellular location is the adherens junction. The protein localises to the focal adhesion. It is found in the cytoplasm. It localises to the cytoskeleton. The protein resides in the sarcolemma. Its subcellular location is the cell projection. The protein localises to the podosome. In terms of biological role, actin filament (F-actin)-binding protein involved in cell-matrix adhesion and cell-cell adhesion. Regulates cell-surface E-cadherin expression and potentiates mechanosensing by the E-cadherin complex. May also play important roles in cell morphology and locomotion. The sequence is that of Vinculin (Vcl) from Mus musculus (Mouse).